The sequence spans 385 residues: Leucine aminopeptidase 1 (385 aa).

The N-terminal stretch at 1 to 19 (MKFPNLLSLGVAASTTVLA) is a signal peptide. A propeptide spanning residues 20 to 87 (AVPNQKPIGD…FPRTFAQTTV (68 aa)) is cleaved from the precursor. Residue N177 is glycosylated (N-linked (GlcNAc...) asparagine). Positions 185, 204, 243, and 270 each coordinate Zn(2+). A disulfide bridge links C319 with C323. H352 serves as a coordination point for Zn(2+).

Belongs to the peptidase M28 family. M28E subfamily. Monomer. Zn(2+) serves as cofactor.

It localises to the secreted. In terms of biological role, extracellular aminopeptidase that allows assimilation of proteinaceous substrates. The protein is Leucine aminopeptidase 1 (LAP1) of Ajellomyces capsulatus (strain H88) (Darling's disease fungus).